We begin with the raw amino-acid sequence, 540 residues long: Chaperonin GroEL (540 aa).

ATP-binding positions include 30 to 33 (TLGP), Lys-51, 87 to 91 (DGTTT), Gly-415, 479 to 481 (NAA), and Asp-495.

It belongs to the chaperonin (HSP60) family. As to quaternary structure, forms a cylinder of 14 subunits composed of two heptameric rings stacked back-to-back. Interacts with the co-chaperonin GroES.

It is found in the cytoplasm. It carries out the reaction ATP + H2O + a folded polypeptide = ADP + phosphate + an unfolded polypeptide.. Its function is as follows. Together with its co-chaperonin GroES, plays an essential role in assisting protein folding. The GroEL-GroES system forms a nano-cage that allows encapsulation of the non-native substrate proteins and provides a physical environment optimized to promote and accelerate protein folding. The polypeptide is Chaperonin GroEL (Raoultella ornithinolytica (Klebsiella ornithinolytica)).